The following is a 162-amino-acid chain: Ribonuclease (162 aa).

The first 29 residues, 1 to 29 (MKKISSVFTMFALIAAILFSGFIPQQAYA), serve as a signal peptide directing secretion. The propeptide occupies 30–53 (ETPLTQTATNETATIQLTSDVHTL). The active-site Proton acceptor is the glutamate 125. Histidine 154 (proton donor) is an active-site residue.

It belongs to the ribonuclease N1/T1 family.

The protein localises to the secreted. Functionally, this is a purine-specific ribonuclease. The chain is Ribonuclease from Bacillus intermedius.